A 281-amino-acid polypeptide reads, in one-letter code: Pantothenate synthetase (281 aa).

ATP is bound at residue 30–37; that stretch reads MGNLHQGH. The Proton donor role is filled by histidine 37. Glutamine 61 is a (R)-pantoate binding site. Position 61 (glutamine 61) interacts with beta-alanine. Residue 149–152 coordinates ATP; the sequence is GNKD. (R)-pantoate is bound at residue glutamine 155. ATP is bound by residues isoleucine 178 and 186 to 189; that span reads MSSR.

Belongs to the pantothenate synthetase family. Homodimer.

It localises to the cytoplasm. It catalyses the reaction (R)-pantoate + beta-alanine + ATP = (R)-pantothenate + AMP + diphosphate + H(+). It participates in cofactor biosynthesis; (R)-pantothenate biosynthesis; (R)-pantothenate from (R)-pantoate and beta-alanine: step 1/1. Catalyzes the condensation of pantoate with beta-alanine in an ATP-dependent reaction via a pantoyl-adenylate intermediate. The polypeptide is Pantothenate synthetase (Shewanella baltica (strain OS185)).